We begin with the raw amino-acid sequence, 199 residues long: NADH-quinone oxidoreductase subunit C (199 aa).

The protein belongs to the complex I 30 kDa subunit family. In terms of assembly, NDH-1 is composed of 14 different subunits. Subunits NuoB, C, D, E, F, and G constitute the peripheral sector of the complex.

It localises to the cell inner membrane. The enzyme catalyses a quinone + NADH + 5 H(+)(in) = a quinol + NAD(+) + 4 H(+)(out). Functionally, NDH-1 shuttles electrons from NADH, via FMN and iron-sulfur (Fe-S) centers, to quinones in the respiratory chain. The immediate electron acceptor for the enzyme in this species is believed to be ubiquinone. Couples the redox reaction to proton translocation (for every two electrons transferred, four hydrogen ions are translocated across the cytoplasmic membrane), and thus conserves the redox energy in a proton gradient. This chain is NADH-quinone oxidoreductase subunit C, found in Rhodopseudomonas palustris (strain BisB18).